The following is a 508-amino-acid chain: NADH-quinone oxidoreductase subunit N 2 (508 aa).

The next 14 membrane-spanning stretches (helical) occupy residues 14 to 34 (SYVA…VIVL), 43 to 63 (SLVW…WYTA), 90 to 110 (FTFF…LLSA), 119 to 139 (GAHM…MFMV), 144 to 164 (LLTI…LAGI), 179 to 199 (FLTG…IYGV), 223 to 243 (GPAL…GFGF), 275 to 295 (GAAM…APFT), 298 to 318 (WALI…LVAL), 327 to 347 (MAYS…ASGL), 353 to 373 (ISSV…IFAV), 400 to 420 (AWAL…VGFL), 433 to 455 (GYLW…YYRV), and 473 to 493 (TGIS…TIFA).

Belongs to the complex I subunit 2 family. NDH-1 is composed of 14 different subunits. Subunits NuoA, H, J, K, L, M, N constitute the membrane sector of the complex.

The protein localises to the cell membrane. It carries out the reaction a quinone + NADH + 5 H(+)(in) = a quinol + NAD(+) + 4 H(+)(out). NDH-1 shuttles electrons from NADH, via FMN and iron-sulfur (Fe-S) centers, to quinones in the respiratory chain. The immediate electron acceptor for the enzyme in this species is believed to be a menaquinone. Couples the redox reaction to proton translocation (for every two electrons transferred, four hydrogen ions are translocated across the cytoplasmic membrane), and thus conserves the redox energy in a proton gradient. This is NADH-quinone oxidoreductase subunit N 2 from Symbiobacterium thermophilum (strain DSM 24528 / JCM 14929 / IAM 14863 / T).